A 222-amino-acid chain; its full sequence is Protein GrpE (222 aa).

A disordered region spans residues 1–21 (MSDEKNKFTDASFENCDLKNP).

The protein belongs to the GrpE family. Homodimer.

It localises to the cytoplasm. Participates actively in the response to hyperosmotic and heat shock by preventing the aggregation of stress-denatured proteins, in association with DnaK and GrpE. It is the nucleotide exchange factor for DnaK and may function as a thermosensor. Unfolded proteins bind initially to DnaJ; upon interaction with the DnaJ-bound protein, DnaK hydrolyzes its bound ATP, resulting in the formation of a stable complex. GrpE releases ADP from DnaK; ATP binding to DnaK triggers the release of the substrate protein, thus completing the reaction cycle. Several rounds of ATP-dependent interactions between DnaJ, DnaK and GrpE are required for fully efficient folding. The sequence is that of Protein GrpE from Bartonella tribocorum (strain CIP 105476 / IBS 506).